The chain runs to 278 residues: Urease accessory protein UreD (278 aa).

Belongs to the UreD family. UreD, UreF and UreG form a complex that acts as a GTP-hydrolysis-dependent molecular chaperone, activating the urease apoprotein by helping to assemble the nickel containing metallocenter of UreC. The UreE protein probably delivers the nickel.

It localises to the cytoplasm. Its function is as follows. Required for maturation of urease via the functional incorporation of the urease nickel metallocenter. This Pseudomonas putida (strain ATCC 700007 / DSM 6899 / JCM 31910 / BCRC 17059 / LMG 24140 / F1) protein is Urease accessory protein UreD.